Here is a 79-residue protein sequence, read N- to C-terminus: UPF0175 protein APE_0890a.1 (79 aa).

It belongs to the UPF0175 family.

This is UPF0175 protein APE_0890a.1 from Aeropyrum pernix (strain ATCC 700893 / DSM 11879 / JCM 9820 / NBRC 100138 / K1).